A 1209-amino-acid polypeptide reads, in one-letter code: MLGHAVNYGSHRTRRSFSRIKEVLKLPNLTDVQTQSYKWFLNEGIREMFDDIMPISDFSGKLSLEFVDYKLLKPKYTLEEARDHDANYSAPLHVTLKLTNHETGEIKTQDVFFGEFPLMTDSGTFVINGAERVIVSQLVRSPGVYYHSDFDKNGRQIFGATVIPNRGAWLEYETDAKDLAYVRIDRTRKLPLTVLIRALGFGSDSEIADMFGESDSIRFTLEKDIHKNPADSRVAEALKDIYERLRPGEPKTTDSSRSLLYARFFDPRRYDLAPVGRYKINKKLSLKNRLLRQTLAETLADPDTGEIIAKKGDVVTHELLDKLSPYLDRDDFKMVTYEPSKEGVLPDPVTVQEIKVYSKVDPERVVKLMSNGHIADDVKHLTPADVLASINYFFDLQDNIGTTDDIDHLGNRRIRRVGELLQNQFRIGLARMERVVRERMSIQDISTVTPQQLINIRPVVASVKEFFGSSQLSQFMDQNNPLGELTHKRRMSALGPGGLSRDRAGYEVRDVHYTHYGRLCPIETPEGPNIGLINSLATYAIVNKYGFIETPYRRVSWDTHKVTDKIDYLTADVEDNYIIAGANARLNEDGSFKDKIVLARHKEDNLEVTPDKIDYMDVIPKQVVSVTSACIPFLENDDSNRALMGANHQRQAVPLINPHAPIVGTGMEYRAAHDSGDALVAKAPGVVEYVDANEIRIRRDDDTLDKYVLEKFRRSNATKNYNQTPAVKQGERVVADEVIADGPAMENGELALGQNPIIAFLTWNMYNYEDAVMISERMVKDDVYTSIHIEDYESEARDTKLGPEEITREIPNVGEDALKDLDEEGIVRIGAEVQDGDILVGKVTPKGVTELSAEERLLHAIFGEKAREVRDTSLRVPHGGGGIVQNVQVFTREAGDELPPGVNKMVRVYIVQKRKIQVGDKMSGRHGNKGTIALVCPEEDMPYLPDGRPVDICLNPMGVPSRMNIGQVLELHLGIAAKQLGIHVATPVFDGASEDDMWNMVREAGIGKDGKTVLYDGRTGEPFHNRVSVGIMYYLKLTHMVDDKIHARSIGPYSLVTQQPLGGKAQFGGQRFGEMEVWALEAYGAAYTLQEILTYKSDDVVGRVKAYEAIVKGERIPKPGVPESFRVLVKELQSLGLDIKVLDMDHKEIELRDMDDDSNDHFNIDTLSKLAEQQEKKKLAEEAAKKDDKPDEPVDESDSSTSSDDKVSK.

Residues 1173–1192 (QQEKKKLAEEAAKKDDKPDE) are compositionally biased toward basic and acidic residues. Residues 1173 to 1209 (QQEKKKLAEEAAKKDDKPDEPVDESDSSTSSDDKVSK) form a disordered region.

The protein belongs to the RNA polymerase beta chain family. In terms of assembly, the RNAP catalytic core consists of 2 alpha, 1 beta, 1 beta' and 1 omega subunit. When a sigma factor is associated with the core the holoenzyme is formed, which can initiate transcription.

The catalysed reaction is RNA(n) + a ribonucleoside 5'-triphosphate = RNA(n+1) + diphosphate. DNA-dependent RNA polymerase catalyzes the transcription of DNA into RNA using the four ribonucleoside triphosphates as substrates. The chain is DNA-directed RNA polymerase subunit beta from Lactobacillus johnsonii (strain CNCM I-12250 / La1 / NCC 533).